The primary structure comprises 742 residues: Clamp-binding protein CrfC (742 aa).

Residues 41 to 45 form a clamp-binding consensus region; the sequence is QLALP. The region spanning 66-402 is the Dynamin-type G domain; that stretch reads SRLEMVLAIV…LWEDSLFAQP (337 aa). Positions 76-83 are G1 motif; the sequence is GTMKAGKS. A G2 motif region spans residues 102–104; it reads MTA. The G3 motif stretch occupies residues 236-239; it reads DTPG. Positions 297–300 are G4 motif; sequence NKFD. The tract at residues 331–334 is G5 motif; that stretch reads FPVS. Positions 440–472 form a coiled coil; that stretch reads RAHGLNVACEQLRQNIHQIEESLQLLQLNQAQV.

This sequence belongs to the TRAFAC class dynamin-like GTPase superfamily. Dynamin/Fzo/YdjA family. In terms of assembly, forms homooligomers. Binds to the beta sliding clamp processivity factor (DnaN) in the presence and absence of DNA, may bind to the clamp itself as homodimers or trimers. Homooligomers may be able to bind more than 1 clamp complex.

The protein resides in the cytoplasm. Its function is as follows. Important for the colocalization of sister nascent DNA strands after replication fork passage during DNA replication, and for positioning and subsequent partitioning of sister chromosomes. Does not have GTPase activity on its own. This Escherichia coli (strain K12) protein is Clamp-binding protein CrfC (crfC).